The chain runs to 427 residues: Adenylosuccinate synthetase (427 aa).

Residues 12–18 (GDEGKGK) and 40–42 (GHT) each bind GTP. Asp13 (proton acceptor) is an active-site residue. Positions 13 and 40 each coordinate Mg(2+). Residues 13-16 (DEGK), 38-41 (NAGH), Thr128, Arg142, Gln223, Thr238, and Arg302 contribute to the IMP site. His41 (proton donor) is an active-site residue. 298–304 (VTTGRAR) contacts substrate. Residues Arg304, 330–332 (KLD), and 412–414 (GVG) each bind GTP.

The protein belongs to the adenylosuccinate synthetase family. As to quaternary structure, homodimer. Mg(2+) is required as a cofactor.

It is found in the cytoplasm. It catalyses the reaction IMP + L-aspartate + GTP = N(6)-(1,2-dicarboxyethyl)-AMP + GDP + phosphate + 2 H(+). It functions in the pathway purine metabolism; AMP biosynthesis via de novo pathway; AMP from IMP: step 1/2. Plays an important role in the de novo pathway of purine nucleotide biosynthesis. Catalyzes the first committed step in the biosynthesis of AMP from IMP. The chain is Adenylosuccinate synthetase from Frankia alni (strain DSM 45986 / CECT 9034 / ACN14a).